The primary structure comprises 160 residues: Gene 34 protein (160 aa).

The span at 1-11 shows a compositional bias: polar residues; it reads MDSPRGISTAT. A disordered region spans residues 1–26; sequence MDSPRGISTATGDAHAEAAVSPAAEI.

The chain is Gene 34 protein from Equus caballus (Horse).